The sequence spans 343 residues: N-acetyl-gamma-glutamyl-phosphate reductase (343 aa).

C149 is a catalytic residue.

The protein belongs to the NAGSA dehydrogenase family. Type 1 subfamily.

It localises to the cytoplasm. The catalysed reaction is N-acetyl-L-glutamate 5-semialdehyde + phosphate + NADP(+) = N-acetyl-L-glutamyl 5-phosphate + NADPH + H(+). It functions in the pathway amino-acid biosynthesis; L-arginine biosynthesis; N(2)-acetyl-L-ornithine from L-glutamate: step 3/4. Its function is as follows. Catalyzes the NADPH-dependent reduction of N-acetyl-5-glutamyl phosphate to yield N-acetyl-L-glutamate 5-semialdehyde. The chain is N-acetyl-gamma-glutamyl-phosphate reductase from Alkalilimnicola ehrlichii (strain ATCC BAA-1101 / DSM 17681 / MLHE-1).